The chain runs to 376 residues: Erythronate-4-phosphate dehydrogenase (376 aa).

The substrate site is built by Ser-45 and Thr-67. Asp-147 lines the NAD(+) pocket. Arg-209 is an active-site residue. An NAD(+)-binding site is contributed by Asp-233. The active site involves Glu-238. The active-site Proton donor is His-255. Gly-258 lines the NAD(+) pocket. Position 259 (Tyr-259) interacts with substrate.

This sequence belongs to the D-isomer specific 2-hydroxyacid dehydrogenase family. PdxB subfamily. As to quaternary structure, homodimer.

It is found in the cytoplasm. It carries out the reaction 4-phospho-D-erythronate + NAD(+) = (R)-3-hydroxy-2-oxo-4-phosphooxybutanoate + NADH + H(+). Its pathway is cofactor biosynthesis; pyridoxine 5'-phosphate biosynthesis; pyridoxine 5'-phosphate from D-erythrose 4-phosphate: step 2/5. Catalyzes the oxidation of erythronate-4-phosphate to 3-hydroxy-2-oxo-4-phosphonooxybutanoate. The protein is Erythronate-4-phosphate dehydrogenase of Shewanella loihica (strain ATCC BAA-1088 / PV-4).